The sequence spans 399 residues: 1-deoxy-D-xylulose 5-phosphate reductoisomerase (399 aa).

NADPH-binding residues include T13, G14, S15, I16, and N127. Position 128 (K128) interacts with 1-deoxy-D-xylulose 5-phosphate. E129 provides a ligand contact to NADPH. D153 provides a ligand contact to Mn(2+). 4 residues coordinate 1-deoxy-D-xylulose 5-phosphate: S154, E155, S187, and H210. E155 is a Mn(2+) binding site. G216 is a binding site for NADPH. S223, N228, K229, and E232 together coordinate 1-deoxy-D-xylulose 5-phosphate. Mn(2+) is bound at residue E232.

The protein belongs to the DXR family. Mg(2+) serves as cofactor. Mn(2+) is required as a cofactor.

The enzyme catalyses 2-C-methyl-D-erythritol 4-phosphate + NADP(+) = 1-deoxy-D-xylulose 5-phosphate + NADPH + H(+). The protein operates within isoprenoid biosynthesis; isopentenyl diphosphate biosynthesis via DXP pathway; isopentenyl diphosphate from 1-deoxy-D-xylulose 5-phosphate: step 1/6. Functionally, catalyzes the NADPH-dependent rearrangement and reduction of 1-deoxy-D-xylulose-5-phosphate (DXP) to 2-C-methyl-D-erythritol 4-phosphate (MEP). This is 1-deoxy-D-xylulose 5-phosphate reductoisomerase from Bordetella parapertussis (strain 12822 / ATCC BAA-587 / NCTC 13253).